A 150-amino-acid chain; its full sequence is Urease accessory protein UreE (150 aa).

The protein belongs to the UreE family.

The protein localises to the cytoplasm. Its function is as follows. Involved in urease metallocenter assembly. Binds nickel. Probably functions as a nickel donor during metallocenter assembly. The protein is Urease accessory protein UreE of Staphylococcus aureus (strain Mu3 / ATCC 700698).